The primary structure comprises 494 residues: MKKQVTFKPFRLSPVDHSLPKVYIFKSLYFRGVDDTGSLSRLQDGIDRLISCLPFLSGEVVPCADIPDKVGVLQVQMPCPSLQEIPMLLVKSYPNHTWPAASTSERWRNTALLDQSYRPLPDFIPPSKPRPVLRFQANFLADGLMLCMGYNHSVFDGTGAGNILEMLADCCRANPNSILALPTNGDIESELRGLLSSPGVAVANASQEAYAINCAHTEVEPEPSSAMLYCWPFLLSSEKIECLQEACNSLLPHIVRLYSGTQSSLINQDTNWPHILSSNDVLTALLAVSIEKAREATGALGHMSRSLAMAVNLRERLKPMPRHYLGNLVTTVWVSHHRPAVKDLETMVLPVPACNRHEIDRDDLLWITHVAFRIRLGLNAINEEHIRGLIHYLHSQDDWEQIGIHFTDPIFISSWRHLKVYELDFGPTIGHAEHFEMDVGTTDGVCVVMPANTRAVGKTKKAPWDIRIVLNPEVLQALIASAIFGWAMVKDAST.

This sequence belongs to the fumigaclavine B O-acetyltransferase family. Monomer.

The enzyme catalyses fumigaclavine B + acetyl-CoA = fumigaclavine A + CoA. Its pathway is alkaloid biosynthesis; ergot alkaloid biosynthesis. In terms of biological role, fumigaclavine B O-acetyltransferase; part of the gene cluster that mediates the biosynthesis of fumiclavanine C, a fungal ergot alkaloid. DmaW catalyzes the first step of ergot alkaloid biosynthesis by condensing dimethylallyl diphosphate (DMAP) and tryptophan to form 4-dimethylallyl-L-tryptophan. The second step is catalyzed by the methyltransferase easF that methylates 4-dimethylallyl-L-tryptophan in the presence of S-adenosyl-L-methionine, resulting in the formation of 4-dimethylallyl-L-abrine. The catalase easC and the FAD-dependent oxidoreductase easE then transform 4-dimethylallyl-L-abrine to chanoclavine-I which is further oxidized by EasD in the presence of NAD(+), resulting in the formation of chanoclavine-I aldehyde. EasA reduces chanoclavine-I aldehyde to dihydrochanoclavine-I aldehyde that spontaneously dehydrates to form 6,8-dimethyl-6,7-didehydroergoline. EasG then catalyzes the reduction of 6,8-dimethyl-6,7-didehydroergoline to form festuclavine. Hydrolysis of festuclavine by easM then leads to the formation of fumigaclavine B which is in turn acetylated by easN to fumigaclavine A. Finally, easL catalyzes the conversion of fumigaclavine A into fumigaclavine C by attaching a dimethylallyl moiety to C-2 of the indole nucleus. The polypeptide is Fumigaclavine B O-acetyltransferase easN (Aspergillus fumigatus (strain ATCC MYA-4609 / CBS 101355 / FGSC A1100 / Af293) (Neosartorya fumigata)).